Reading from the N-terminus, the 610-residue chain is Protein Smaug homolog 1 (610 aa).

S67 is modified (phosphoserine). 3 disordered regions span residues 177–222 (ARGP…EEGS), 318–366 (SSPS…LQPP), and 464–487 (NRGF…GRRN). The SAM domain occupies 222 to 295 (SGMKDVPAWL…LKSLERDIIE (74 aa)). S319 is modified (phosphoserine). Phosphothreonine is present on T323. A compositionally biased stretch (low complexity) spans 344-358 (SAATVTSATASASAG). At R465 the chain carries Omega-N-methylarginine. Positions 467–480 (FGQSNSLPTASSVG) are enriched in polar residues. S472 bears the Phosphoserine mark.

Belongs to the SMAUG family. Expressed in brain (at protein level).

The protein resides in the cytoplasm. The protein localises to the cell projection. It localises to the dendrite. Its subcellular location is the synapse. It is found in the synaptosome. Acts as a translational repressor of SRE-containing messengers. The chain is Protein Smaug homolog 1 (Samd4a) from Rattus norvegicus (Rat).